Consider the following 217-residue polypeptide: C-type lectin domain family 2 member I (217 aa).

The Cytoplasmic portion of the chain corresponds to 1-53 (MPDCLETGEKLFVHNMNAQCVQKPEEGNGPLGTGGKIVQGKCFRIISTVSPVK). Residues 54–74 (LYCCYGVIMVLTVAVIALSVA) traverse the membrane as a helical; Signal-anchor for type II membrane protein segment. Residues 75-217 (LSTKKTEQII…YNLHCQTPPV (143 aa)) are Extracellular-facing. Cysteine 92 and cysteine 103 are disulfide-bonded. The C-type lectin domain occupies 99-203 (VGNKCFYFSG…SYINRMWICS (105 aa)). N-linked (GlcNAc...) asparagine glycosylation occurs at asparagine 112. Cysteine 120 and cysteine 202 are joined by a disulfide.

Detected in osteoblasts, growth plate chondrocytes and skeletal muscle overlying the bone (at protein level). Detected in spleen, B-cells, dendritic cells, thymus, and in IL2-activated natural killer cells.

Its subcellular location is the cell membrane. Its function is as follows. Inhibits osteoclast formation. Receptor for KLRB1F. Enhances T-cell activation. Plays a role in splenocyte activation, T-cell responses and IL-2 production. This chain is C-type lectin domain family 2 member I (Clec2i), found in Mus musculus (Mouse).